Reading from the N-terminus, the 404-residue chain is MDYSEIMVRHGELSTKGKNRMRFINKLKNNIQDVLAPFPAITVRSDRDRTHVSLNGTDYQPIVEALKLVFGVQALSPVYKLEKSVPLLVTAVQDIMTSLYRDGLTFKIATKRSDHAFELDSRELNSLLGGAVFEVLPNIQAQMKHPDVTLKVEIRDEAAYISYEEIKGAGGLPVGTSGKGMLMLSGGIDSPVAGYLALKRGLDIEVVHFASPPYTSPGALAKAQNLTRRLTRFGGNIQFIEVPFTEIQEEIKNKAPEAYLMTLTRRFMMRITDAIREQRKGLVIVNGESLGQVASQTLESMQAINAVTSTPIIRPVVTMDKLEIIEMAQAIDTFDISIQPFEDCCTIFAPDRPKTNPKLGNAEKYEERFDIDGLVQRAVSGIVVTEITPEIVNDEVENLIDALL.

The THUMP domain maps to 60 to 165 (QPIVEALKLV…DEAAYISYEE (106 aa)). ATP is bound by residues 183 to 184 (ML), 208 to 209 (HF), Arg265, Gly287, and Gln296.

The protein belongs to the ThiI family.

The protein resides in the cytoplasm. The enzyme catalyses [ThiI sulfur-carrier protein]-S-sulfanyl-L-cysteine + a uridine in tRNA + 2 reduced [2Fe-2S]-[ferredoxin] + ATP + H(+) = [ThiI sulfur-carrier protein]-L-cysteine + a 4-thiouridine in tRNA + 2 oxidized [2Fe-2S]-[ferredoxin] + AMP + diphosphate. It catalyses the reaction [ThiS sulfur-carrier protein]-C-terminal Gly-Gly-AMP + S-sulfanyl-L-cysteinyl-[cysteine desulfurase] + AH2 = [ThiS sulfur-carrier protein]-C-terminal-Gly-aminoethanethioate + L-cysteinyl-[cysteine desulfurase] + A + AMP + 2 H(+). It functions in the pathway cofactor biosynthesis; thiamine diphosphate biosynthesis. In terms of biological role, catalyzes the ATP-dependent transfer of a sulfur to tRNA to produce 4-thiouridine in position 8 of tRNAs, which functions as a near-UV photosensor. Also catalyzes the transfer of sulfur to the sulfur carrier protein ThiS, forming ThiS-thiocarboxylate. This is a step in the synthesis of thiazole, in the thiamine biosynthesis pathway. The sulfur is donated as persulfide by IscS. In Streptococcus pyogenes serotype M49 (strain NZ131), this protein is Probable tRNA sulfurtransferase.